Reading from the N-terminus, the 404-residue chain is CCA-adding enzyme (404 aa).

ATP-binding residues include Gly-27 and Arg-30. CTP contacts are provided by Gly-27 and Arg-30. Mg(2+) contacts are provided by Asp-40 and Asp-42. 5 residues coordinate ATP: Arg-111, Asp-154, Arg-157, Arg-160, and Arg-163. CTP-binding residues include Arg-111, Asp-154, Arg-157, Arg-160, and Arg-163.

The protein belongs to the tRNA nucleotidyltransferase/poly(A) polymerase family. Bacterial CCA-adding enzyme type 3 subfamily. In terms of assembly, homodimer. The cofactor is Mg(2+).

It catalyses the reaction a tRNA precursor + 2 CTP + ATP = a tRNA with a 3' CCA end + 3 diphosphate. The enzyme catalyses a tRNA with a 3' CCA end + 2 CTP + ATP = a tRNA with a 3' CCACCA end + 3 diphosphate. In terms of biological role, catalyzes the addition and repair of the essential 3'-terminal CCA sequence in tRNAs without using a nucleic acid template. Adds these three nucleotides in the order of C, C, and A to the tRNA nucleotide-73, using CTP and ATP as substrates and producing inorganic pyrophosphate. tRNA 3'-terminal CCA addition is required both for tRNA processing and repair. Also involved in tRNA surveillance by mediating tandem CCA addition to generate a CCACCA at the 3' terminus of unstable tRNAs. While stable tRNAs receive only 3'-terminal CCA, unstable tRNAs are marked with CCACCA and rapidly degraded. The sequence is that of CCA-adding enzyme from Geobacillus thermodenitrificans (strain NG80-2).